A 392-amino-acid polypeptide reads, in one-letter code: ESX-1 secretion-associated protein EspA (392 aa).

The interval 302–392 (TRQALRPRAD…GQKVLVRNVV (91 aa)) is disordered. The span at 334 to 344 (QGMGGPVGMGG) shows a compositional bias: gly residues.

In terms of assembly, homodimer; disulfide-linked.

Its subcellular location is the secreted. In terms of biological role, required for secretion of EsxA (ESAT-6) and EsxB (CFP-10) and for virulence. This is ESX-1 secretion-associated protein EspA from Mycobacterium tuberculosis (strain CDC 1551 / Oshkosh).